The following is a 352-amino-acid chain: Ion-translocating oxidoreductase complex subunit D (352 aa).

4 helical membrane-spanning segments follow: residues 20-40, 42-62, 89-109, and 123-143; these read IMLL…WFFG, GTLV…ALVL, IPPL…VIIA, and PAMI…TSWL. Position 187 is an FMN phosphoryl threonine (threonine 187). 5 consecutive transmembrane segments (helical) span residues 214–234, 242–262, 267–287, 301–321, and 322–342; these read ILAG…GVWL, WHIP…GWLF, LAAP…FFIL, LIFG…GGYP, and DGVA…DYYT.

It belongs to the NqrB/RnfD family. In terms of assembly, the complex is composed of six subunits: RsxA, RsxB, RsxC, RsxD, RsxE and RsxG. FMN serves as cofactor.

It is found in the cell inner membrane. Its function is as follows. Part of a membrane-bound complex that couples electron transfer with translocation of ions across the membrane. Required to maintain the reduced state of SoxR. The polypeptide is Ion-translocating oxidoreductase complex subunit D (Escherichia coli O127:H6 (strain E2348/69 / EPEC)).